The primary structure comprises 442 residues: MKLQYLVALLFVQAVPPVTAGYIHQYALAGSAIRQPIDQKTQREDLNKLVSDSPLLSLHRTICEIESVSNHEGAVGEMLIKYLRDHDFTVEKQIVPADRGTNSTAERFNIWAYPKGFPRPKIILTSHIDTVPPHIKYSLHAPDGDFDRAKVRIMGRGTVDAKASVAAQIIAALKHLKSNKDIPLGLLFVVSEEVGGSGMVHFSNSELNTNPPFFHTLIFGEPTDLTLVDGHKGNLRVTIHAKGVAAHSGYPWLGHSAISEILPILARMDELGDIPVETGGLPSSEKYGRTTVNIGTIKGGAADNVVPETASASISVRLAAGTPEEAEEVIRRAVNDVSGGSTNITVNFPDSMPYPPIDLDVDVEGFDISTVNYGTDIPKLEIHDEELEVKVKRYLYGPGTIFVAHGAEEGITVGDLEKAVEGYSKLIDAAVERDWPREVVVN.

A signal peptide spans 1-20 (MKLQYLVALLFVQAVPPVTA). A glycan (N-linked (GlcNAc...) asparagine) is linked at Asn-102. Residue Asp-160 coordinates Zn(2+). The Proton acceptor role is filled by Glu-192. Glu-193 is a binding site for Zn(2+). A glycan (N-linked (GlcNAc...) asparagine) is linked at Asn-343.

The protein belongs to the peptidase M20A family. Zn(2+) is required as a cofactor.

It localises to the secreted. The chain is Probable carboxypeptidase PAAG_00768 from Paracoccidioides lutzii (strain ATCC MYA-826 / Pb01) (Paracoccidioides brasiliensis).